The sequence spans 179 residues: Alkyl hydroperoxide reductase AhpD (179 aa).

Cysteine 130 acts as the Proton donor in catalysis. Residues cysteine 130 and cysteine 133 are joined by a disulfide bond. Cysteine 133 serves as the catalytic Cysteine sulfenic acid (-SOH) intermediate.

It belongs to the AhpD family. In terms of assembly, homotrimer.

It catalyses the reaction N(6)-[(R)-dihydrolipoyl]-L-lysyl-[lipoyl-carrier protein] + a hydroperoxide = N(6)-[(R)-lipoyl]-L-lysyl-[lipoyl-carrier protein] + an alcohol + H2O. Its function is as follows. Antioxidant protein with alkyl hydroperoxidase activity. Required for the reduction of the AhpC active site cysteine residues and for the regeneration of the AhpC enzyme activity. This Rhodococcus erythropolis (strain PR4 / NBRC 100887) protein is Alkyl hydroperoxide reductase AhpD.